A 119-amino-acid polypeptide reads, in one-letter code: RNA guanine-N7 methyltransferase activating subunit (119 aa).

Positions 1 to 55 (MSDTSEEIPNFEEMFASRFTKDDKEYQEYLKRPPESPPIVEEWNSRAGGNQRNRG) are interaction with RNMT. The interval 30 to 119 (LKRPPESPPI…HNQRPPYGYY (90 aa)) is disordered. Position 36 is a phosphoserine (serine 36). Residues 36-42 (SPPIVEE) carry the RNMT-activating domain motif. The segment covering 47 to 61 (AGGNQRNRGNWLQDN) has biased composition (polar residues). Residues 56 to 119 (NWLQDNRQFR…HNQRPPYGYY (64 aa)) are RNA-binding. The span at 62–73 (RQFRGRDNRRGW) shows a compositional bias: basic and acidic residues. The residue at position 85 (arginine 85) is an Omega-N-methylarginine. Serine 86 carries the post-translational modification Phosphoserine. Residues 89–112 (NNNYPQQRPEPYYQQQYTQYGHNQ) show a composition bias toward low complexity.

It belongs to the RAM family. Interacts with RNMT; this interaction enhances mRNA binding and cap methyltransferase activity.

Its subcellular location is the nucleus. In terms of biological role, regulatory subunit of the mRNA-capping methyltransferase RNMT:RAMAC complex that methylates the N7 position of the added guanosine to the 5'-cap structure of mRNAs. Promotes the recruitment of the methyl donor, S-adenosyl-L-methionine, to RNMT. Regulates RNMT expression by a post-transcriptional stabilizing mechanism. Binds RNA. This is RNA guanine-N7 methyltransferase activating subunit (Ramac) from Mus musculus (Mouse).